Here is a 558-residue protein sequence, read N- to C-terminus: 2-isopropylmalate synthase (558 aa).

Residues 31–305 (PRWCSTDLRD…YPNLDFSDMR (275 aa)) enclose the Pyruvate carboxyltransferase domain. Mg(2+) contacts are provided by Asp40, His244, His246, and Asn280. A regulatory domain region spans residues 439-558 (NPDDKGQMKL…NACHPLYKEA (120 aa)).

The protein belongs to the alpha-IPM synthase/homocitrate synthase family. LeuA type 2 subfamily. As to quaternary structure, homodimer. It depends on Mg(2+) as a cofactor.

The protein resides in the cytoplasm. The enzyme catalyses 3-methyl-2-oxobutanoate + acetyl-CoA + H2O = (2S)-2-isopropylmalate + CoA + H(+). Its pathway is amino-acid biosynthesis; L-leucine biosynthesis; L-leucine from 3-methyl-2-oxobutanoate: step 1/4. Catalyzes the condensation of the acetyl group of acetyl-CoA with 3-methyl-2-oxobutanoate (2-ketoisovalerate) to form 3-carboxy-3-hydroxy-4-methylpentanoate (2-isopropylmalate). This is 2-isopropylmalate synthase from Marinomonas sp. (strain MWYL1).